The sequence spans 144 residues: Putative pre-16S rRNA nuclease (144 aa).

Belongs to the YqgF nuclease family.

The protein resides in the cytoplasm. Functionally, could be a nuclease involved in processing of the 5'-end of pre-16S rRNA. This is Putative pre-16S rRNA nuclease from Oenococcus oeni (strain ATCC BAA-331 / PSU-1).